Reading from the N-terminus, the 518-residue chain is GMP synthase [glutamine-hydrolyzing] (518 aa).

Residues 13–203 (KIIVLDFGSQ…ALNVCGCKGD (191 aa)) form the Glutamine amidotransferase type-1 domain. Cys-90 (nucleophile) is an active-site residue. Residues His-177 and Glu-179 contribute to the active site. The region spanning 204-393 (WTMENFSEVE…LGMPDAIVWR (190 aa)) is the GMPS ATP-PPase domain. 231–237 (SGGVDSS) contributes to the ATP binding site.

Homodimer.

The catalysed reaction is XMP + L-glutamine + ATP + H2O = GMP + L-glutamate + AMP + diphosphate + 2 H(+). Its pathway is purine metabolism; GMP biosynthesis; GMP from XMP (L-Gln route): step 1/1. Catalyzes the synthesis of GMP from XMP. In Listeria welshimeri serovar 6b (strain ATCC 35897 / DSM 20650 / CCUG 15529 / CIP 8149 / NCTC 11857 / SLCC 5334 / V8), this protein is GMP synthase [glutamine-hydrolyzing].